The following is a 750-amino-acid chain: Photosystem I P700 chlorophyll a apoprotein A1 (750 aa).

8 helical membrane passes run 70-93, 156-179, 195-219, 291-309, 346-369, 385-411, 433-455, and 531-549; these read VFSA…FHGA, LYCT…FHYH, LNHH…HVSL, IAHH…GHMY, WHAQ…HHMY, LSLF…IFMV, AIIS…LYIH, and FLVH…LILL. [4Fe-4S] cluster-binding residues include C573 and C582. The next 2 helical transmembrane spans lie at 589–610 and 664–686; these read HVFL…HFSW and LSAY…MFLF. H675 serves as a coordination point for chlorophyll a'. 2 residues coordinate chlorophyll a: M683 and Y691. W692 is a phylloquinone binding site. A helical transmembrane segment spans residues 724–744; sequence AVGVTHYLLGGIATTWAFFLA.

This sequence belongs to the PsaA/PsaB family. In terms of assembly, the PsaA/B heterodimer binds the P700 chlorophyll special pair and subsequent electron acceptors. PSI consists of a core antenna complex that captures photons, and an electron transfer chain that converts photonic excitation into a charge separation. The eukaryotic PSI reaction center is composed of at least 11 subunits. P700 is a chlorophyll a/chlorophyll a' dimer, A0 is one or more chlorophyll a, A1 is one or both phylloquinones and FX is a shared 4Fe-4S iron-sulfur center. is required as a cofactor.

It is found in the plastid. The protein resides in the chloroplast thylakoid membrane. It carries out the reaction reduced [plastocyanin] + hnu + oxidized [2Fe-2S]-[ferredoxin] = oxidized [plastocyanin] + reduced [2Fe-2S]-[ferredoxin]. Functionally, psaA and PsaB bind P700, the primary electron donor of photosystem I (PSI), as well as the electron acceptors A0, A1 and FX. PSI is a plastocyanin-ferredoxin oxidoreductase, converting photonic excitation into a charge separation, which transfers an electron from the donor P700 chlorophyll pair to the spectroscopically characterized acceptors A0, A1, FX, FA and FB in turn. Oxidized P700 is reduced on the lumenal side of the thylakoid membrane by plastocyanin. The protein is Photosystem I P700 chlorophyll a apoprotein A1 of Jasminum nudiflorum (Winter jasmine).